The chain runs to 422 residues: Ameloblastin (422 aa).

A signal peptide spans 1–26; the sequence is MSASKIPLFKMKGLLLFLSLVKMSLA. Proline 42 carries the hydroxyproline modification. At serine 48 the chain carries Phosphoserine. Residue serine 117 is glycosylated (O-linked (GalNAc...) serine). The segment at 271–321 is disordered; sequence GLNQNSPKGGDFTVEVDSPVSVTKGPEKGEGPEGSPLQEASPDKGENPALL.

Belongs to the ameloblastin family. As to expression, ameloblast-specific.

Its subcellular location is the secreted. It localises to the extracellular space. It is found in the extracellular matrix. In terms of biological role, involved in the mineralization and structural organization of enamel. The polypeptide is Ameloblastin (Ambn) (Rattus norvegicus (Rat)).